A 473-amino-acid polypeptide reads, in one-letter code: Sulfhydrylase-like protein lolC1 (473 aa).

Position 226 is an N6-(pyridoxal phosphate)lysine (K226).

Belongs to the trans-sulfuration enzymes family. Pyridoxal 5'-phosphate is required as a cofactor.

Its pathway is alkaloid biosynthesis. Sulfhydrylase-like protein; part of the gene cluster that mediates the biosynthesis of loline alkaloids, potent insecticidal agents composed of a pyrrolizidine ring system and an uncommon ether bridge linking carbons 2 and 7. Lolines are structurally differentiated by the various modifications of the L-amino group and include norloline, loline, N-methylloline, N-acetylloline, N-acetylnorloline, and N-formylloline. The first committed step is the condensation of O-acetyl-L-homoserine (derived from L-aspartic acid) and L-proline, probably catalyzed by the gamma-type pyridoxal 5'-phosphate(PLP)-dependent enzyme lolC, to give the diamino diacid, NACPP. Ensuing cyclization, decarboxylation, and acetylation steps yield 1-exo-acetamidopyrrolizidine (AcAP). LolO is required for installation of the ether bridge upon the pathway intermediate, 1-exo-acetamidopyrrolizidine (AcAP). In sequential 2-oxoglutarate- and O(2)-consuming steps, lolO removes hydrogens from C2 and C7 of AcAP to form both carbon-oxygen bonds in N-acetylnorloline (NANL), the precursor to all other lolines. The enzymes lolD, lolE, lolF and lolT have also been proposed to be involved in the ether-bridge installation. Further processing of the exocyclic moiety of NANL by fungal N-acetamidase (LolN), methyltransferase (LolM), and cytochrome P450 (LolP) enzymes, with occasional involvement of a plant acetyltransferase, generates the other known lolines. LolN transforms NANL to norlonine which is monomethylated and dimethylated to respectively lonine and N-methyllonine (NML) by lolM. LolP catalyzes hydroxylation of the methyl group in N-methylloline (NML) and further oxygenation to N-formylloline (NFL). A plant acetyltransferase is responsible for the acetylation of loline to form N-acetylloline (NAL). LolA might interact with aspartate kinase to prevent feedback inhibition of its activity by these end products and thereby promote production of L-homoserine from L-aspartate. This chain is Sulfhydrylase-like protein lolC1, found in Epichloe uncinata (Endophyte fungus).